Consider the following 420-residue polypeptide: Methanogen homoaconitase large subunit (420 aa).

The [4Fe-4S] cluster site is built by cysteine 302, cysteine 362, and cysteine 365.

The protein belongs to the aconitase/IPM isomerase family. LeuC type 2 subfamily. Heterotetramer of 2 HacA and 2 HacB proteins. [4Fe-4S] cluster serves as cofactor.

It catalyses the reaction (2R)-homocitrate = (2R,3S)-homoisocitrate. The enzyme catalyses (2R)-homocitrate = cis-homoaconitate + H2O. The catalysed reaction is (2R,3S)-homoisocitrate = cis-homoaconitate + H2O. It carries out the reaction cis-(homo)2aconitate + H2O = (2R,3S)-iso(homo)2citrate. It catalyses the reaction cis-(homo)3aconitate + H2O = (2R,3S)-iso(homo)3citrate. The enzyme catalyses (R)-malate = maleate + H2O. The catalysed reaction is cis-aconitate + H2O = D-threo-isocitrate. It participates in organic acid metabolism; 2-oxosuberate biosynthesis. Component of a hydro-lyase with broad substrate specificity for cis-unsaturated tricarboxylic acids. Catalyzes both the reversible dehydration of (R)-homocitrate ((R)-2-hydroxybutane-1,2,4-tricarboxylate) to produce cis-homoaconitate ((Z)-but-1-ene-1,2,4-tricarboxylate), and its hydration to homoisocitrate ((1R,2S)-1-hydroxybutane-1,2,4-tricarboxylate). Is also able to hydrate the analogous longer chain substrates cis-homo(2)-aconitate, cis-homo(3)-aconitate, and even the non-physiological cis-homo(4)-aconitate with similar efficiency. These reactions are part of the biosynthesis pathway of coenzyme B. Can also catalyze the hydration of maleate to (R)-malate, and that of cis-aconitate. Cannot catalyze the hydration of citraconate and the dehydration of (S)-homocitrate, citramalate, 2-isopropylmalate, 3-isopropylmalate, citrate or threo-DL-isocitrate. The protein is Methanogen homoaconitase large subunit (hacA) of Methanocaldococcus jannaschii (strain ATCC 43067 / DSM 2661 / JAL-1 / JCM 10045 / NBRC 100440) (Methanococcus jannaschii).